We begin with the raw amino-acid sequence, 751 residues long: MADQAQDVRPTEWGPGKTPQGRARLPSSRPREKPQLSCNLCRRRKLRCDRQRPCSSCAQRELGLSCTYASDRVLSNGVAHQTRTTTQDRIRHLESLVYDLMQNSSANVNAQDQVGATPSPRGQPRGPDYPTPAAVHAPSTNEEPVSAAVSPADYGSMQSTGGGANYVGSAHWAAVLDGIAELKDHLDNEESHHSDSQGVDPPCPQVTGPQLLYGCPKPADKDEILSSIPARSVVDRLVSRYFNSFEMSPAVLHSVQFLKEYEAFWEDPQTTSPIWLGLLFTIMCLATQFEKSRLDPGVQSPAVLSMERELQEMVDTFRLRIPQCLVLGSYAKGGPFVLETLMLYIAAEIFLSSDAEIEIWILMGNTVQLALHMGYHRDPKHFKGLSPFAAEMRRRIWATIVEMDLGLSAQMGLPRMVKHWQTDTQEPSNLQDSDFDSATVEMPPSRLNTDLTPILYRLVKARLMTTIGYIWDFSADVRPYPYTEVQKMDDKLDLARKSIPECLKWHSMARNITDSPQHIMQKVILETVFYRAKIVLHRKYMFLPLAQSASSRRIVLESALKLLDYQHMLQEETQPFCQLYQERWRVSSLVNHDFLLATSILCYYLQHAWGATQRVSESDSFDETIMASLRRSHDIWLQSSNSSKEARKVVRALAVVLGRVNTPSADSVGEAGLVFGLPSTYPPSTTNDYSQETPGGLGSQFPMFNSALMPNWATFADDLISAPMITPTAEWQEMDETVDAMGSLNWPWNLQ.

The disordered stretch occupies residues 1–35 (MADQAQDVRPTEWGPGKTPQGRARLPSSRPREKPQ). Residues 38–66 (CNLCRRRKLRCDRQRPCSSCAQRELGLSC) constitute a DNA-binding region (zn(2)-C6 fungal-type). Positions 107–116 (NVNAQDQVGA) are enriched in polar residues. The tract at residues 107 to 153 (NVNAQDQVGATPSPRGQPRGPDYPTPAAVHAPSTNEEPVSAAVSPAD) is disordered.

The protein resides in the nucleus. Transcription factor that regulates the expression of the gene cluster that mediates the biosynthesis of fusarisetin A. The polypeptide is Fusarisetin A cluster transcription factor fsa6 (Fusarium sp. (strain FN080326)).